Reading from the N-terminus, the 147-residue chain is Small ribosomal subunit protein uS5 (147 aa).

The S5 DRBM domain maps to 9–72 (FEEVIVDIGR…DDAFKNIIHV (64 aa)).

The protein belongs to the universal ribosomal protein uS5 family. Part of the 30S ribosomal subunit. Contacts proteins S4 and S8.

Its function is as follows. With S4 and S12 plays an important role in translational accuracy. Located at the back of the 30S subunit body where it stabilizes the conformation of the head with respect to the body. The chain is Small ribosomal subunit protein uS5 from Campylobacter concisus (strain 13826).